The sequence spans 192 residues: MLLFPGLKPVLNASTVIVNPVRAVFPGLVLSTKRSFYSINRLNAENKINDIANTSKEASSSVQMFKPPEFSQFKDSYQKDYERIAKYTLIPLTMVPFYASFTGGVINPLLDASLSSIFLIYLQYGFTSCIIDYIPKEKYPRWHKLALYCLYGGSMLSLYGIYELETKNNGFVDLVKKLWNENDDHLYIFGRN.

Residues 1 to 42 (MLLFPGLKPVLNASTVIVNPVRAVFPGLVLSTKRSFYSINRL) constitute a mitochondrion transit peptide. The Mitochondrial matrix portion of the chain corresponds to 43-88 (NAENKINDIANTSKEASSSVQMFKPPEFSQFKDSYQKDYERIAKYT). Residues 89–109 (LIPLTMVPFYASFTGGVINPL) traverse the membrane as a helical segment. The Mitochondrial intermembrane segment spans residues 110-113 (LDAS). The chain crosses the membrane as a helical span at residues 114–134 (LSSIFLIYLQYGFTSCIIDYI). Residues 135-144 (PKEKYPRWHK) are Mitochondrial matrix-facing. The helical transmembrane segment at 145 to 165 (LALYCLYGGSMLSLYGIYELE) threads the bilayer. Residues 166–192 (TKNNGFVDLVKKLWNENDDHLYIFGRN) lie on the Mitochondrial intermembrane side of the membrane.

It belongs to the CybS family. Component of the TIM22 complex, whose core is composed of TIM18, TIM22 and TIM54, associated with the peripheral proteins MRS5/TIM12 and the 70 kDa heterohexamer composed of TIM9 and TIM10 (or TIM8 and TIM13).

The protein localises to the mitochondrion inner membrane. Functionally, component of the TIM22 complex, a complex that mediates the import and insertion of multi-pass transmembrane proteins into the mitochondrial inner membrane. The TIM22 complex forms a twin-pore translocase that uses the membrane potential as external driving force. Its role in the complex is unclear but it may be involved in the assembly and stabilization of the TIM22 complex. The polypeptide is Mitochondrial import inner membrane translocase subunit TIM18 (TIM18) (Saccharomyces cerevisiae (strain ATCC 204508 / S288c) (Baker's yeast)).